We begin with the raw amino-acid sequence, 50 residues long: Light-harvesting protein B-880 alpha chain (50 aa).

Topologically, residues 1–12 (MYKLWLLFDPRR) are cytoplasmic. A helical transmembrane segment spans residues 13–33 (ALVALSAFLFVLALIIHFIAL). His29 is a binding site for a bacteriochlorophyll. Over 34-50 (STDRFNWLEGKPAVKAA) the chain is Periplasmic.

Belongs to the antenna complex alpha subunit family. As to quaternary structure, the core complex is formed by different alpha and beta chains, binding bacteriochlorophyll molecules, and arranged most probably in tetrameric structures disposed around the reaction center. The non-pigmented gamma chains may constitute additional components.

The protein localises to the cell inner membrane. Its function is as follows. Antenna complexes are light-harvesting systems, which transfer the excitation energy to the reaction centers. This chain is Light-harvesting protein B-880 alpha chain, found in Rhodoblastus acidophilus (Rhodopseudomonas acidophila).